The primary structure comprises 178 residues: Probable chorismate pyruvate-lyase (178 aa).

Residues R72, L110, and E169 each contribute to the substrate site.

The protein belongs to the UbiC family.

The protein localises to the cytoplasm. The catalysed reaction is chorismate = 4-hydroxybenzoate + pyruvate. It functions in the pathway cofactor biosynthesis; ubiquinone biosynthesis. In terms of biological role, removes the pyruvyl group from chorismate, with concomitant aromatization of the ring, to provide 4-hydroxybenzoate (4HB) for the ubiquinone pathway. The polypeptide is Probable chorismate pyruvate-lyase (Nitrosomonas europaea (strain ATCC 19718 / CIP 103999 / KCTC 2705 / NBRC 14298)).